The primary structure comprises 252 residues: Imidazole glycerol phosphate synthase subunit HisF (252 aa).

Catalysis depends on residues Asp11 and Asp130.

Belongs to the HisA/HisF family. As to quaternary structure, heterodimer of HisH and HisF.

The protein resides in the cytoplasm. The catalysed reaction is 5-[(5-phospho-1-deoxy-D-ribulos-1-ylimino)methylamino]-1-(5-phospho-beta-D-ribosyl)imidazole-4-carboxamide + L-glutamine = D-erythro-1-(imidazol-4-yl)glycerol 3-phosphate + 5-amino-1-(5-phospho-beta-D-ribosyl)imidazole-4-carboxamide + L-glutamate + H(+). It functions in the pathway amino-acid biosynthesis; L-histidine biosynthesis; L-histidine from 5-phospho-alpha-D-ribose 1-diphosphate: step 5/9. IGPS catalyzes the conversion of PRFAR and glutamine to IGP, AICAR and glutamate. The HisF subunit catalyzes the cyclization activity that produces IGP and AICAR from PRFAR using the ammonia provided by the HisH subunit. The sequence is that of Imidazole glycerol phosphate synthase subunit HisF from Acinetobacter baumannii (strain AB307-0294).